The following is a 394-amino-acid chain: Elongation factor Tu 1 (394 aa).

The region spanning Lys10–Gln204 is the tr-type G domain. The G1 stretch occupies residues Gly19 to Thr26. Position 19–26 (Gly19–Thr26) interacts with GTP. Thr26 is a Mg(2+) binding site. The segment at Gly60–Ser64 is G2. The interval Asp81 to Gly84 is G3. GTP is bound by residues Asp81–His85 and Asn136–Asp139. Residues Asn136–Asp139 are G4. The G5 stretch occupies residues Ser174–Leu176.

The protein belongs to the TRAFAC class translation factor GTPase superfamily. Classic translation factor GTPase family. EF-Tu/EF-1A subfamily. As to quaternary structure, monomer.

The protein localises to the cytoplasm. The enzyme catalyses GTP + H2O = GDP + phosphate + H(+). GTP hydrolase that promotes the GTP-dependent binding of aminoacyl-tRNA to the A-site of ribosomes during protein biosynthesis. The polypeptide is Elongation factor Tu 1 (Pseudoalteromonas translucida (strain TAC 125)).